Consider the following 456-residue polypeptide: CBL-interacting protein kinase 16 (456 aa).

The region spanning 22–277 is the Protein kinase domain; sequence YELGRLLGQG…IPEIMRTPWF (256 aa). ATP is bound by residues 28–36 and Lys51; that span reads LGQGTFAKV. The active-site Proton acceptor is Asp145. The segment at 163 to 192 is activation loop; the sequence is DFGLAALPEQLRQDGLLHTQCGTPAYVAPE. The 27-residue stretch at 309–335 folds into the NAF domain; it reads AMSPRTCNAFQLISSMSSGFDLSGMFE. Residues 339–368 form a PPI region; the sequence is KAATVFTSRAPAATVIQKLEAVGRSLGYSA.

It belongs to the protein kinase superfamily. CAMK Ser/Thr protein kinase family. SNF1 subfamily. The cofactor is Mn(2+).

It catalyses the reaction L-seryl-[protein] + ATP = O-phospho-L-seryl-[protein] + ADP + H(+). It carries out the reaction L-threonyl-[protein] + ATP = O-phospho-L-threonyl-[protein] + ADP + H(+). Its function is as follows. CIPK serine-threonine protein kinases interact with CBL proteins. Binding of a CBL protein to the regulatory NAF domain of CIPK protein lead to the activation of the kinase in a calcium-dependent manner. The sequence is that of CBL-interacting protein kinase 16 (CIPK16) from Oryza sativa subsp. japonica (Rice).